The primary structure comprises 386 residues: Leupaxin (386 aa).

Met1 carries the post-translational modification N-acetylmethionine. Positions 3–15 (ELDALLEELERCT) match the LD motif 1 motif. Ser19 is modified (phosphoserine). The interval 19–52 (SEEYSNPVSCHLDQQSTEESKIPQTPKTLSSQGN) is disordered. Tyr22 bears the Phosphotyrosine mark. Positions 22-52 (YSNPVSCHLDQQSTEESKIPQTPKTLSSQGN) are enriched in polar residues. Ser54 is subject to Phosphoserine. Position 62 is a phosphotyrosine (Tyr62). Short sequence motifs (LD motif) lie at residues 70 to 82 (NVYS…KESV) and 92 to 103 (QLDELMAHLSEM). Tyr72 is modified (phosphotyrosine; by LYN). Position 81 is a phosphoserine (Ser81). 4 LIM zinc-binding domains span residues 150-208 (GYCA…RLFS), 209-267 (PRCA…AMFS), 268-326 (PKCG…HRRG), and 327-386 (TLCH…LFSQ).

It belongs to the paxillin family. As to quaternary structure, interacts with unphosphorylated ITGA4. Interacts with AR and SRF. Interacts with PTK2B/PYK2, PTPN22 and PTPN12. Interacts (via LD motif 3) with LYN and the interaction is induced upon B-cell antigen receptor (BCR) activation. Interacts (via LD motif 3) with PTK2/FAK. Post-translationally, phosphorylated on tyrosine residues. Phosphorylation on Tyr-72 is important for its inhibitory function. Bombesin stimulates phosphorylation on Tyr-22, Tyr-62 and Tyr-72. In terms of tissue distribution, expressed in osteoclasts (at protein level). Highly expressed in vascular smooth muscle.

It localises to the cytoplasm. The protein localises to the cell junction. Its subcellular location is the focal adhesion. The protein resides in the nucleus. It is found in the perinuclear region. It localises to the cell projection. The protein localises to the podosome. Its subcellular location is the cell membrane. In terms of biological role, transcriptional coactivator for androgen receptor (AR) and serum response factor (SRF). Contributes to the regulation of cell adhesion, spreading and cell migration and acts as a negative regulator in integrin-mediated cell adhesion events. Suppresses the integrin-induced tyrosine phosphorylation of paxillin (PXN). May play a critical role as an adapter protein in the formation of the adhesion zone in osteoclasts. Negatively regulates B-cell antigen receptor (BCR) signaling. The protein is Leupaxin (Lpxn) of Mus musculus (Mouse).